Consider the following 347-residue polypeptide: Eukaryotic translation initiation factor 3 subunit H (347 aa).

The 144-residue stretch at 6–149 (VCIDSSVALK…PSSTGPQGHT (144 aa)) folds into the MPN domain. The segment at 136–155 (SDTDPSSTGPQGHTTTTPSG) is disordered. The segment covering 138 to 155 (TDPSSTGPQGHTTTTPSG) has biased composition (polar residues).

Belongs to the eIF-3 subunit H family. As to quaternary structure, component of the eukaryotic translation initiation factor 3 (eIF-3) complex.

It is found in the cytoplasm. Functionally, component of the eukaryotic translation initiation factor 3 (eIF-3) complex, which is involved in protein synthesis of a specialized repertoire of mRNAs and, together with other initiation factors, stimulates binding of mRNA and methionyl-tRNAi to the 40S ribosome. The eIF-3 complex specifically targets and initiates translation of a subset of mRNAs involved in cell proliferation. The polypeptide is Eukaryotic translation initiation factor 3 subunit H (Yarrowia lipolytica (strain CLIB 122 / E 150) (Yeast)).